The following is a 379-amino-acid chain: Flap endonuclease 1 (379 aa).

Positions 1-105 are N-domain; sequence MGVKGLNQLI…GELEKRLLRR (105 aa). Residue aspartate 34 coordinates Mg(2+). Residues arginine 47 and arginine 71 each coordinate DNA. Mg(2+)-binding residues include aspartate 87, glutamate 159, glutamate 161, aspartate 180, and aspartate 182. Positions 123–254 are I-domain; sequence DMVRYEKRTV…VTAFKLIKEH (132 aa). Residue glutamate 159 participates in DNA binding. DNA-binding residues include glycine 232 and aspartate 234. Aspartate 234 is a Mg(2+) binding site. Positions 341-349 are interaction with PCNA; that stretch reads VQGRLDGFF. The disordered stretch occupies residues 344–379; the sequence is RLDGFFQSVPKPKDSADKKRKNDTKSAKSKKAKTRK. The segment covering 361 to 379 has biased composition (basic residues); sequence KKRKNDTKSAKSKKAKTRK.

It belongs to the XPG/RAD2 endonuclease family. FEN1 subfamily. Interacts with PCNA. Three molecules of FEN1 bind to one PCNA trimer with each molecule binding to one PCNA monomer. PCNA stimulates the nuclease activity without altering cleavage specificity. Mg(2+) is required as a cofactor. Phosphorylated. Phosphorylation upon DNA damage induces relocalization to the nuclear plasma.

The protein resides in the nucleus. It is found in the nucleolus. The protein localises to the nucleoplasm. Its subcellular location is the mitochondrion. Structure-specific nuclease with 5'-flap endonuclease and 5'-3' exonuclease activities involved in DNA replication and repair. During DNA replication, cleaves the 5'-overhanging flap structure that is generated by displacement synthesis when DNA polymerase encounters the 5'-end of a downstream Okazaki fragment. It enters the flap from the 5'-end and then tracks to cleave the flap base, leaving a nick for ligation. Also involved in the long patch base excision repair (LP-BER) pathway, by cleaving within the apurinic/apyrimidinic (AP) site-terminated flap. Acts as a genome stabilization factor that prevents flaps from equilibrating into structures that lead to duplications and deletions. Also possesses 5'-3' exonuclease activity on nicked or gapped double-stranded DNA, and exhibits RNase H activity. Also involved in replication and repair of rDNA and in repairing mitochondrial DNA. This chain is Flap endonuclease 1, found in Debaryomyces hansenii (strain ATCC 36239 / CBS 767 / BCRC 21394 / JCM 1990 / NBRC 0083 / IGC 2968) (Yeast).